We begin with the raw amino-acid sequence, 226 residues long: Leucyl/phenylalanyl-tRNA--protein transferase (226 aa).

The protein belongs to the L/F-transferase family.

The protein resides in the cytoplasm. It catalyses the reaction N-terminal L-lysyl-[protein] + L-leucyl-tRNA(Leu) = N-terminal L-leucyl-L-lysyl-[protein] + tRNA(Leu) + H(+). The catalysed reaction is N-terminal L-arginyl-[protein] + L-leucyl-tRNA(Leu) = N-terminal L-leucyl-L-arginyl-[protein] + tRNA(Leu) + H(+). The enzyme catalyses L-phenylalanyl-tRNA(Phe) + an N-terminal L-alpha-aminoacyl-[protein] = an N-terminal L-phenylalanyl-L-alpha-aminoacyl-[protein] + tRNA(Phe). Functions in the N-end rule pathway of protein degradation where it conjugates Leu, Phe and, less efficiently, Met from aminoacyl-tRNAs to the N-termini of proteins containing an N-terminal arginine or lysine. The sequence is that of Leucyl/phenylalanyl-tRNA--protein transferase from Salinibacter ruber (strain DSM 13855 / M31).